Here is a 179-residue protein sequence, read N- to C-terminus: DNA utilization protein HofN (179 aa).

The chain crosses the membrane as a helical span at residues 19 to 39 (LRFWLLMFVAPLLLAVGITLI).

It localises to the cell inner membrane. In terms of biological role, required for the use of extracellular DNA as a nutrient. This chain is DNA utilization protein HofN (hofN), found in Escherichia coli (strain K12).